The following is a 473-amino-acid chain: PEP-dependent dihydroxyacetone kinase, phosphoryl donor subunit DhaM (473 aa).

One can recognise a PTS EIIA type-4 domain in the interval 1-137 (MVNLVIVSHS…LAAKQAQLGI (137 aa)). The active-site Tele-phosphohistidine intermediate is H9. An HPr domain is found at 155-242 (ARSVTVTIRN…SLAAEDFGEH (88 aa)). The Pros-phosphohistidine intermediate role is filled by H169. Positions 266-472 (PLPLAQPARH…IDPAAQRVSC (207 aa)) are PTS EI-like, N-terminal part. The active-site Tele-phosphohistidine intermediate is the H432.

The protein belongs to the PEP-utilizing enzyme family. Homodimer. The dihydroxyacetone kinase complex is composed of a homodimer of DhaM, a homodimer of DhaK and the subunit DhaL.

The catalysed reaction is dihydroxyacetone + phosphoenolpyruvate = dihydroxyacetone phosphate + pyruvate. In terms of biological role, component of the dihydroxyacetone kinase complex, which is responsible for the phosphoenolpyruvate (PEP)-dependent phosphorylation of dihydroxyacetone. DhaM serves as the phosphoryl donor. Is phosphorylated by phosphoenolpyruvate in an EI- and HPr-dependent reaction, and a phosphorelay system on histidine residues finally leads to phosphoryl transfer to DhaL and dihydroxyacetone. This chain is PEP-dependent dihydroxyacetone kinase, phosphoryl donor subunit DhaM, found in Pantoea ananatis (strain LMG 20103).